A 1676-amino-acid polypeptide reads, in one-letter code: Protein TIC 214 (1676 aa).

6 helical membrane-spanning segments follow: residues 24–44, 70–90, 93–113, 130–150, 170–190, and 218–238; these read KIIN…ALAL, LILG…YIAF, PYTL…GNNL, LEIL…TCIF, MVFL…VLMC, and FFLV…IQSL. 2 stretches are compositionally biased toward basic and acidic residues: residues 264-276 and 283-298; these read LKKS…GKST and SHEK…SKLE. 4 disordered regions span residues 264-302, 546-610, 1123-1151, and 1372-1436; these read LKKS…NEDE, LVVF…SYSI, NKQS…NLIL, and QQQN…SEDD. Over residues 562–586 the composition is skewed to polar residues; the sequence is DSGNIQNKSSDKTINPQNNLTNSKT. The segment covering 597–610 has biased composition (basic and acidic residues); the sequence is TTEKEPKDDKSYSI. A compositionally biased stretch (polar residues) spans 1123 to 1138; that stretch reads NKQSLQKGNSKGNSNL. The span at 1372 to 1390 shows a compositional bias: low complexity; the sequence is QQQNQTTTKINTETKNQQK. Residues 1384–1436 are a coiled coil; it reads ETKNQQKNRVENEENKETENQQNAETKNKQKSKTENEENKETENQQNDESEDD. 2 stretches are compositionally biased toward basic and acidic residues: residues 1391–1402 and 1409–1426; these read NRVENEENKETE and TKNK…KETE.

It belongs to the TIC214 family. As to quaternary structure, part of the Tic complex.

The protein resides in the plastid. Its subcellular location is the chloroplast inner membrane. Functionally, involved in protein precursor import into chloroplasts. May be part of an intermediate translocation complex acting as a protein-conducting channel at the inner envelope. The polypeptide is Protein TIC 214 (Cuscuta obtusiflora (Peruvian dodder)).